The following is a 641-amino-acid chain: Mannosyl-oligosaccharide 1,2-alpha-mannosidase IB (641 aa).

An N-acetylthreonine modification is found at threonine 2. The Cytoplasmic segment spans residues 2–36 (TTPALLPLSGRRIPPLNLGPPSFPHHRATLRLSEK). Residues 37–57 (FILLLILSAFITLCFGAFFFL) traverse the membrane as a helical; Signal-anchor for type II membrane protein segment. Residues 58–641 (PDSSKHKRFD…TTLSGNPAVR (584 aa)) are Lumenal-facing. Residues 153-175 (NKPLPPVPIPNLVGIRGGDPEDN) are disordered. A disulfide bridge connects residues cysteine 462 and cysteine 494. The active-site Proton donor is glutamate 508. Threonine 619 is a binding site for Ca(2+). Residue asparagine 631 is glycosylated (N-linked (GlcNAc...) asparagine).

This sequence belongs to the glycosyl hydrolase 47 family. Ca(2+) serves as cofactor. Highest levels of expression in placenta and testis.

Its subcellular location is the golgi apparatus membrane. It carries out the reaction N(4)-(alpha-D-Man-(1-&gt;2)-alpha-D-Man-(1-&gt;2)-alpha-D-Man-(1-&gt;3)-[alpha-D-Man-(1-&gt;2)-alpha-D-Man-(1-&gt;3)-[alpha-D-Man-(1-&gt;2)-alpha-D-Man-(1-&gt;6)]-alpha-D-Man-(1-&gt;6)]-beta-D-Man-(1-&gt;4)-beta-D-GlcNAc-(1-&gt;4)-beta-D-GlcNAc)-L-asparaginyl-[protein] (N-glucan mannose isomer 9A1,2,3B1,2,3) + 4 H2O = N(4)-(alpha-D-Man-(1-&gt;3)-[alpha-D-Man-(1-&gt;3)-[alpha-D-Man-(1-&gt;6)]-alpha-D-Man-(1-&gt;6)]-beta-D-Man-(1-&gt;4)-beta-D-GlcNAc-(1-&gt;4)-beta-D-GlcNAc)-L-asparaginyl-[protein] (N-glucan mannose isomer 5A1,2) + 4 beta-D-mannose. The catalysed reaction is N(4)-(alpha-D-Man-(1-&gt;2)-alpha-D-Man-(1-&gt;2)-alpha-D-Man-(1-&gt;3)-[alpha-D-Man-(1-&gt;3)-[alpha-D-Man-(1-&gt;2)-alpha-D-Man-(1-&gt;6)]-alpha-D-Man-(1-&gt;6)]-beta-D-Man-(1-&gt;4)-beta-D-GlcNAc-(1-&gt;4)-beta-D-GlcNAc)-L-asparaginyl-[protein] (N-glucan mannose isomer 8A1,2,3B1,3) + 3 H2O = N(4)-(alpha-D-Man-(1-&gt;3)-[alpha-D-Man-(1-&gt;3)-[alpha-D-Man-(1-&gt;6)]-alpha-D-Man-(1-&gt;6)]-beta-D-Man-(1-&gt;4)-beta-D-GlcNAc-(1-&gt;4)-beta-D-GlcNAc)-L-asparaginyl-[protein] (N-glucan mannose isomer 5A1,2) + 3 beta-D-mannose. It participates in protein modification; protein glycosylation. With respect to regulation, inhibited by both 1-deoxymannojirimycin and kifunensine. Its function is as follows. Involved in the maturation of Asn-linked oligosaccharides. Progressively trim alpha-1,2-linked mannose residues from Man(9)GlcNAc(2) to produce Man(5)GlcNAc(2). This is Mannosyl-oligosaccharide 1,2-alpha-mannosidase IB (MAN1A2) from Homo sapiens (Human).